A 301-amino-acid polypeptide reads, in one-letter code: CPX chromosomal region candidate gene 1 protein (301 aa).

The segment at 1–77 is disordered; that stretch reads MSYPTKEGSD…ENSELETEIQ (77 aa). The span at 44–60 shows a compositional bias: polar residues; sequence VETNPINREPGTATSQE.

Expressed in a variety of fetal tissues.

The chain is CPX chromosomal region candidate gene 1 protein (CPXCR1) from Homo sapiens (Human).